A 375-amino-acid chain; its full sequence is WAT1-related protein At1g70260 (375 aa).

The next 10 helical transmembrane spans lie at 10–30 (LVPF…TIMA), 41–61 (FVFV…FSFL), 72–92 (IFSW…IFMF), 106–126 (IVVC…SIIL), 143–163 (MGTI…GPFI), 191–211 (WFLG…FNVV), 225–245 (VASF…LFME), 259–278 (LYLI…SVHV), 289–309 (VPLF…SFFV), and 312–332 (LHYG…TVSW). Residues 25–134 (ALTIMAKTAL…ILGRSKLDWR (110 aa)) enclose the EamA domain. The segment at 337 to 356 (ESEEKQSSNEERKSIKTIHH) is disordered.

It belongs to the drug/metabolite transporter (DMT) superfamily. Plant drug/metabolite exporter (P-DME) (TC 2.A.7.4) family.

It is found in the membrane. The polypeptide is WAT1-related protein At1g70260 (Arabidopsis thaliana (Mouse-ear cress)).